We begin with the raw amino-acid sequence, 595 residues long: MPRLWYSRYLASARLRCRPLLISEQYGARIYQHLLRRTINTEANVQRPNDIVPLRKQLKEEAKRSKSQSRNGRGKKQVAANNEWELTVGIEIHAQLNSEAKLFSRAPTSTVAEPNSNVALFDLAFPGSQPEFQAATLLPALRAAIALNCEVQHTSRFDRKHYFYQDQPAGYQITQYYEPFARNGFIKLYDYDGIAPEDGKFVRIDIKQMQLEQDTAKSHEHPPSAHFLDFNRVSHPLIEIITMPQIHSPATAAACVRKIQAILQATSAVTTGMELGGLRADVNVSVRRRDAPPGAGEYYGVRGLGQRTEIKNLSSFKAVEDAIIAERDRQIRVLESGGTVEVETRGWSIGSTETRKLRSKEGEVDYRYMPDPDLHPLFIDDGLVSTLKENLPTLPDQLLAMLVGPMYGLSLEDAKPLVELDDGARLEYYQDVFDVLQALHSDDRDAAKKGLGRTAANWVLHELGALHTKAEVAWHADRIPAQTLAELIDQLIRKKITSSVAKQVLVMVFEGDQRPIQQLLEEENLLLRPLCREEYIALANSLIEENPQMVAQIREKNQLGKIGWFVGQMVRQGEKGRVEAQRAEEILRELILKRN.

Residues methionine 1–proline 114 constitute a mitochondrion transit peptide. The segment at lysine 59–valine 78 is disordered.

The protein belongs to the GatB/GatE family. GatB subfamily. Subunit of the heterotrimeric GatCAB amidotransferase (AdT) complex, composed of A, B and C subunits.

It localises to the mitochondrion. The catalysed reaction is L-glutamyl-tRNA(Gln) + L-glutamine + ATP + H2O = L-glutaminyl-tRNA(Gln) + L-glutamate + ADP + phosphate + H(+). Its function is as follows. Allows the formation of correctly charged Gln-tRNA(Gln) through the transamidation of misacylated Glu-tRNA(Gln) in the mitochondria. The reaction takes place in the presence of glutamine and ATP through an activated gamma-phospho-Glu-tRNA(Gln). This is Glutamyl-tRNA(Gln) amidotransferase subunit B, mitochondrial from Talaromyces stipitatus (strain ATCC 10500 / CBS 375.48 / QM 6759 / NRRL 1006) (Penicillium stipitatum).